Consider the following 461-residue polypeptide: Phosphoglucosamine mutase (461 aa).

The active-site Phosphoserine intermediate is the serine 107. 4 residues coordinate Mg(2+): serine 107, aspartate 254, aspartate 256, and aspartate 258. Position 107 is a phosphoserine (serine 107).

It belongs to the phosphohexose mutase family. Requires Mg(2+) as cofactor. In terms of processing, activated by phosphorylation.

The enzyme catalyses alpha-D-glucosamine 1-phosphate = D-glucosamine 6-phosphate. In terms of biological role, catalyzes the conversion of glucosamine-6-phosphate to glucosamine-1-phosphate. The protein is Phosphoglucosamine mutase of Bifidobacterium longum (strain DJO10A).